The chain runs to 212 residues: Ferric nitrobindin-like protein (212 aa).

Residues 1 to 11 are compositionally biased toward basic and acidic residues; that stretch reads MTSSDQPERGS. Residues 1–36 form a disordered region; that stretch reads MTSSDQPERGSGDAAVQAAAERAEQTRGRNVPQFDD. Residues 64–70 carry the GXWXGXG motif; that stretch reads GVWRGDG.

The protein belongs to the nitrobindin family.

The polypeptide is Ferric nitrobindin-like protein (Saccharopolyspora erythraea (strain ATCC 11635 / DSM 40517 / JCM 4748 / NBRC 13426 / NCIMB 8594 / NRRL 2338)).